Reading from the N-terminus, the 376-residue chain is Probable transcription factor At1g61730 (376 aa).

The disordered stretch occupies residues 1–150 (MTKKLNPLED…RVKKDEESVK (150 aa)). The segment covering 17–40 (SDEDDVETSEAGEASDDSSSSEED) has biased composition (acidic residues). S49 carries the post-translational modification Phosphoserine. The span at 49–72 (SPSATTAAAPPAKSTAVSTAADSD) shows a compositional bias: low complexity. The span at 73–83 (SGSETETDSDS) shows a compositional bias: acidic residues. Residues 87-103 (NPPNSGSGKTIALNTVN) show a composition bias toward polar residues.

This sequence belongs to the GeBP family. As to quaternary structure, interacts with DEK3.

The protein is Probable transcription factor At1g61730 of Arabidopsis thaliana (Mouse-ear cress).